The following is a 199-amino-acid chain: Recombination protein RecR (199 aa).

The C4-type zinc-finger motif lies at cysteine 57–cysteine 72. The region spanning serine 80–proline 175 is the Toprim domain.

This sequence belongs to the RecR family.

Its function is as follows. May play a role in DNA repair. It seems to be involved in an RecBC-independent recombinational process of DNA repair. It may act with RecF and RecO. In Alkalilimnicola ehrlichii (strain ATCC BAA-1101 / DSM 17681 / MLHE-1), this protein is Recombination protein RecR.